The chain runs to 320 residues: uncharacterized protein (320 aa).

The segment at 196–273 is disordered; that stretch reads VVPEYDFDSE…RSKNNSNTTK (78 aa). A compositionally biased stretch (acidic residues) spans 200-210; it reads YDFDSESESDN. Residues 211–226 are compositionally biased toward basic and acidic residues; sequence SEEKRFVPVLETEKAP. The segment covering 248 to 273 has biased composition (polar residues); that stretch reads QPKNPKQTTLKNTLDTRSKNNSNTTK.

This is an uncharacterized protein from Acanthamoeba polyphaga mimivirus (APMV).